The sequence spans 433 residues: Adenylosuccinate synthetase (433 aa).

GTP-binding positions include 11 to 17 and 39 to 41; these read GDEGKGK and GHT. The Proton acceptor role is filled by aspartate 12. Residues aspartate 12 and glycine 39 each coordinate Mg(2+). Residues 12–15, 37–40, threonine 134, arginine 148, asparagine 230, threonine 245, and arginine 309 each bind IMP; these read DEGK and NAGH. Histidine 40 acts as the Proton donor in catalysis. Residue 305 to 311 coordinates substrate; that stretch reads VTTGRKR. GTP-binding positions include arginine 311, 337–339, and 419–421; these read KLD and GTG.

The protein belongs to the adenylosuccinate synthetase family. In terms of assembly, homodimer. Mg(2+) serves as cofactor.

It is found in the cytoplasm. The enzyme catalyses IMP + L-aspartate + GTP = N(6)-(1,2-dicarboxyethyl)-AMP + GDP + phosphate + 2 H(+). It participates in purine metabolism; AMP biosynthesis via de novo pathway; AMP from IMP: step 1/2. Plays an important role in the de novo pathway and in the salvage pathway of purine nucleotide biosynthesis. Catalyzes the first committed step in the biosynthesis of AMP from IMP. This is Adenylosuccinate synthetase from Eremothecium gossypii (strain ATCC 10895 / CBS 109.51 / FGSC 9923 / NRRL Y-1056) (Yeast).